Here is a 217-residue protein sequence, read N- to C-terminus: Protein-L-isoaspartate O-methyltransferase (217 aa).

Ser-64 is an active-site residue.

Belongs to the methyltransferase superfamily. L-isoaspartyl/D-aspartyl protein methyltransferase family.

It is found in the cytoplasm. The enzyme catalyses [protein]-L-isoaspartate + S-adenosyl-L-methionine = [protein]-L-isoaspartate alpha-methyl ester + S-adenosyl-L-homocysteine. Its function is as follows. Catalyzes the methyl esterification of L-isoaspartyl residues in peptides and proteins that result from spontaneous decomposition of normal L-aspartyl and L-asparaginyl residues. It plays a role in the repair and/or degradation of damaged proteins. The chain is Protein-L-isoaspartate O-methyltransferase from Nitrobacter winogradskyi (strain ATCC 25391 / DSM 10237 / CIP 104748 / NCIMB 11846 / Nb-255).